The primary structure comprises 485 residues: UBX domain-containing protein 11 (485 aa).

Residues 1–26 are disordered; it reads MSSPLASLSKTRKVPLESEPVNPGRR. Residues 67–143 are a coiled coil; that stretch reads HDSELLTSMA…VGEMERFLND (77 aa). In terms of domain architecture, SEP spans 224–288; that stretch reads LEPIPLKLYR…VSDLRNQVYP (65 aa). The region spanning 386–463 is the UBX domain; it reads PVPPLSMLRI…GLVPNATLLL (78 aa). A phosphoserine mark is found at Ser-479 and Ser-483.

In terms of assembly, interacts with GNA12, GNA13, RND1, RND2 and RND3. Strongly expressed in testis. Also expressed in lung, brain and thymus.

The protein localises to the cytoplasm. It is found in the cytoskeleton. Functionally, may be involved in the reorganization of actin cytoskeleton mediated by RND1, RND2 and RND3. Promotes RHOA activation mediated by GNA12 and GNA13. This chain is UBX domain-containing protein 11 (Ubxn11), found in Rattus norvegicus (Rat).